The chain runs to 775 residues: Kazrin (775 aa).

The tract at residues 38-66 is disordered; it reads AELSGGGGPGPGPGAAASASAAGDSAATN. A compositionally biased stretch (low complexity) spans 51-64; that stretch reads GAAASASAAGDSAA. Residues 74-256 adopt a coiled-coil conformation; it reads AQVLLREEVS…LATLTKDVPK (183 aa). The interval 174 to 333 is interaction with PPL; the sequence is RDFIRNYEQH…SAAEGDRSST (160 aa). Residues 290–427 form a disordered region; sequence QQTLYHSHPP…QSLSLSEGEE (138 aa). Ser352, Ser367, and Ser387 each carry phosphoserine. Positions 411 to 422 are enriched in polar residues; the sequence is SQCSPTRQSLSL. 3 SAM domains span residues 446-511, 524-588, and 612-679; these read WKAG…YRDA, DHHW…LYQV, and WTNQ…SAVF. Disordered regions lie at residues 688-715 and 729-762; these read REAE…SSGL and RGFS…LEQC. Residues 732–742 show a composition bias toward basic and acidic residues; sequence SSKDPDFHDDY.

It belongs to the kazrin family. In terms of assembly, isoform 2, isoform 3 and isoform 4 interact with PPL N-terminus. As to expression, isoform 2, isoform 3 and isoform 4 are expressed in several cell lines including keratinocytes and bladder and epidermoid carcinoma (at protein level). Isoform 2, isoform 3 and isoform 4 are expressed in hair follicle and interfollicular epidermis (at protein level).

It is found in the cytoplasm. The protein localises to the cytoskeleton. The protein resides in the cell junction. Its subcellular location is the desmosome. It localises to the nucleus. Functionally, component of the cornified envelope of keratinocytes. May be involved in the interplay between adherens junctions and desmosomes. The function in the nucleus is not known. The protein is Kazrin of Homo sapiens (Human).